The chain runs to 210 residues: Transcriptional regulator GfcR (210 aa).

The interval 39-60 (VERSGAATEPEPRAEPEGPDDI) is disordered. Residues 48 to 60 (PEPRAEPEGPDDI) are compositionally biased toward basic and acidic residues.

It belongs to the purine/pyrimidine phosphoribosyltransferase family. GfcR subfamily.

Interaction with effectors modulates GfcR activity. 2-keto-3-deoxy-6-phosphogluconate (KDPG), fructose-1,6-bisphosphate (FBP), 2-keto-3-deoxy-6-phosphogalactonate (KDPGal) and glycerol-3-phosphate (G3P), which are intermediates of sugar and glycerol degradation pathways, can act as inducer molecules. DNA-binding transcriptional regulator that functions as a regulator of central sugar catabolic pathways. Is both a local regulator of specific steps in the pathways for D-glucose and D-fructose degradation and a global regulator of hexose catabolism. In the presence of D-glucose, activates expression of the gene encoding the gluconate dehydratase (gad), which is involved in D-glucose catabolism via the semiphosphorylative Entner-Doudoroff (spED) pathway. In the presence of D-fructose, activates expression of the genes encoding the PTS system EIIC component (ptfC) and the fructose-1,6-bisphosphate aldolase (fba), which are involved in D-fructose uptake and degradation via the modified Embden-Meyerhof pathway. In addition, in the presence of D-glucose, D-fructose, D-galactose or glycerol, it activates expression of the genes encoding glyceraldehyde-3-phosphate dehydrogenase (gap) and pyruvate kinase (pykA), enzymes common to all four degradation pathways. Acts by binding directly to the promoter region of the regulated genes. The polypeptide is Transcriptional regulator GfcR (Haloferax volcanii (strain ATCC 29605 / DSM 3757 / JCM 8879 / NBRC 14742 / NCIMB 2012 / VKM B-1768 / DS2) (Halobacterium volcanii)).